Here is an 89-residue protein sequence, read N- to C-terminus: Small ribosomal subunit protein uS15 (89 aa).

The protein belongs to the universal ribosomal protein uS15 family. Part of the 30S ribosomal subunit. Forms a bridge to the 50S subunit in the 70S ribosome, contacting the 23S rRNA.

Functionally, one of the primary rRNA binding proteins, it binds directly to 16S rRNA where it helps nucleate assembly of the platform of the 30S subunit by binding and bridging several RNA helices of the 16S rRNA. Its function is as follows. Forms an intersubunit bridge (bridge B4) with the 23S rRNA of the 50S subunit in the ribosome. In Rhizobium johnstonii (strain DSM 114642 / LMG 32736 / 3841) (Rhizobium leguminosarum bv. viciae), this protein is Small ribosomal subunit protein uS15.